Consider the following 256-residue polypeptide: DNA repair protein RecO (256 aa).

It belongs to the RecO family.

Functionally, involved in DNA repair and RecF pathway recombination. The chain is DNA repair protein RecO from Streptococcus equi subsp. zooepidemicus (strain MGCS10565).